The following is a 256-amino-acid chain: uncharacterized protein (256 aa).

The S4 RNA-binding domain maps to 16–83 (VRLQKILSRA…DSLVYLALNK (68 aa)). The Nucleophile role is filled by Asp121.

Belongs to the pseudouridine synthase RsuA family.

The enzyme catalyses a uridine in RNA = a pseudouridine in RNA. This is an uncharacterized protein from Mycobacterium leprae (strain TN).